The sequence spans 689 residues: Glycine--tRNA ligase beta subunit (689 aa).

Belongs to the class-II aminoacyl-tRNA synthetase family. In terms of assembly, tetramer of two alpha and two beta subunits.

Its subcellular location is the cytoplasm. It carries out the reaction tRNA(Gly) + glycine + ATP = glycyl-tRNA(Gly) + AMP + diphosphate. The polypeptide is Glycine--tRNA ligase beta subunit (Lacticaseibacillus paracasei (strain ATCC 334 / BCRC 17002 / CCUG 31169 / CIP 107868 / KCTC 3260 / NRRL B-441) (Lactobacillus paracasei)).